The sequence spans 401 residues: Nicotinate phosphoribosyltransferase (401 aa).

H224 carries the post-translational modification Phosphohistidine; by autocatalysis.

Belongs to the NAPRTase family. Post-translationally, transiently phosphorylated on a His residue during the reaction cycle. Phosphorylation strongly increases the affinity for substrates and increases the rate of nicotinate D-ribonucleotide production. Dephosphorylation regenerates the low-affinity form of the enzyme, leading to product release.

It carries out the reaction nicotinate + 5-phospho-alpha-D-ribose 1-diphosphate + ATP + H2O = nicotinate beta-D-ribonucleotide + ADP + phosphate + diphosphate. It participates in cofactor biosynthesis; NAD(+) biosynthesis; nicotinate D-ribonucleotide from nicotinate: step 1/1. Catalyzes the synthesis of beta-nicotinate D-ribonucleotide from nicotinate and 5-phospho-D-ribose 1-phosphate at the expense of ATP. The polypeptide is Nicotinate phosphoribosyltransferase (Pseudomonas putida (strain ATCC 700007 / DSM 6899 / JCM 31910 / BCRC 17059 / LMG 24140 / F1)).